A 190-amino-acid polypeptide reads, in one-letter code: Peptidyl-tRNA hydrolase (190 aa).

Position 14 (Phe14) interacts with tRNA. The active-site Proton acceptor is His19. TRNA-binding residues include Met64, Asn66, and Asn112.

The protein belongs to the PTH family. As to quaternary structure, monomer.

Its subcellular location is the cytoplasm. The enzyme catalyses an N-acyl-L-alpha-aminoacyl-tRNA + H2O = an N-acyl-L-amino acid + a tRNA + H(+). Functionally, hydrolyzes ribosome-free peptidyl-tRNAs (with 1 or more amino acids incorporated), which drop off the ribosome during protein synthesis, or as a result of ribosome stalling. Its function is as follows. Catalyzes the release of premature peptidyl moieties from peptidyl-tRNA molecules trapped in stalled 50S ribosomal subunits, and thus maintains levels of free tRNAs and 50S ribosomes. This chain is Peptidyl-tRNA hydrolase, found in Staphylococcus epidermidis (strain ATCC 35984 / DSM 28319 / BCRC 17069 / CCUG 31568 / BM 3577 / RP62A).